The sequence spans 1309 residues: MLLNGDCPESLKKEAAAAEPPRENGLDEAGPGDETTGQEVIVIQDTGFSVKILAPGIEPFSLQVSPQEMVQEIHQVLMDREDTCHRTCFSLHLDGNVLDHFSELRSVEGLQEGSVLRVVEEPYTVREARIHVRHVRDLLKSLDPSDAFNGVDCNSLSFLSVFTDGDLGDSGKRKKGLEMDPIDCTPPEYILPGSRERPLCPLQPQNRDWKPLQCLKVLTMSGWNPPPGNRKMHGDLMYLFVITAEDRQVSITASTRGFYLNQSTAYHFNPKPASPRFLSHSLVELLNQISPTFKKNFAVLQKKRVQRHPFERIATPFQVYSWTAPQAEHAMDCVRAEDAYTSRLGYEEHIPGQTRDWNEELQTTRELPRKNLPERLLRERAIFKVHSDFTAAATRGAMAVIDGNVMAINPSEETKMQMFIWNNIFFSLGFDVRDHYKDFGGDVAAYVAPTNDLNGVRTYNAVDVEGLYTLGTVVVDYRGYRVTAQSIIPGILERDQEQSVIYGSIDFGKTVVSHPRYLELLERTSRPLKILRHQVLNDRDEEVELCSSVECKGIIGNDGRHYILDLLRTFPPDLNFLPVPGEELPEECARAGFPRAHRHKLCCLRQELVDAFVEHRYLLFMKLAALQLMQQNASQLETPSSLENGGPSSLESKSEDPPGQEAGSEEEGSSASGLAKVKELAETIAADDGTDPRSREVIRNACKAVGSISSTAFDIRFNPDIFSPGVRFPESCQDEVRDQKQLLKDAAAFLLSCQIPGLVKDCMEHAVLPVDGATLAEVMRQRGINMRYLGKVLELVLRSPARHQLDHVFKIGIGELITRSAKHIFKTYLQGVELSGLSAAISHFLNCFLSSYPNPVAHLPADELVSKKRNKRRKNRPPGAADNTAWAVMTPQELWKNICQEAKNYFDFDLECETVDQAVETYGLQKITLLREISLKTGIQVLLKEYSFDSRHKPAFTEEDVLNIFPVVKHVNPKASDAFHFFQSGQAKVQQGFLKEGCELINEALNLFNNVYGAMHVETCACLRLLARLHYIMGDYAEALSNQQKAVLMSERVMGTEHPNTIQEYMHLALYCFASSQLSTALSLLYRARYLMLLVFGEDHPEMALLDNNIGLVLHGVMEYDLSLRFLENALAVSTKYHGPKALKVALSHHLVARVYESKAEFRSALQHEKEGYTIYKTQLGEDHEKTKESSEYLKCLTQQAVALQRTMNEIYRNGSSANIPPLKFTAPSMASVLEQLNVINGILFIPLSQKDLENLKAEVARRHQLQEASRNRDRAEEPMATEPAPAGAPGDLGSQPPAAKDPSPSVQG.

The tract at residues 1–34 (MLLNGDCPESLKKEAAAAEPPRENGLDEAGPGDE) is disordered. The segment covering 9–25 (ESLKKEAAAAEPPRENG) has biased composition (basic and acidic residues). Phosphoserine is present on residues S279 and S281. The region spanning 335 to 577 (RAEDAYTSRL…RTFPPDLNFL (243 aa)) is the Clu domain. A compositionally biased stretch (polar residues) spans 636 to 651 (LETPSSLENGGPSSLE). A disordered region spans residues 636–674 (LETPSSLENGGPSSLESKSEDPPGQEAGSEEEGSSASGL). Phosphoserine occurs at positions 654, 664, and 723. TPR repeat units follow at residues 978-1011 (AFHF…FNNV), 1020-1053 (CACL…SERV), 1104-1137 (ALLD…STKY), and 1146-1179 (ALSH…YKTQ). Positions 1264 to 1278 (HQLQEASRNRDRAEE) are enriched in basic and acidic residues. The interval 1264-1309 (HQLQEASRNRDRAEEPMATEPAPAGAPGDLGSQPPAAKDPSPSVQG) is disordered. The segment covering 1279–1290 (PMATEPAPAGAP) has biased composition (low complexity).

It belongs to the CLU family.

It localises to the cytoplasm. The protein localises to the cytoplasmic granule. Its function is as follows. mRNA-binding protein involved in proper cytoplasmic distribution of mitochondria. Specifically binds mRNAs of nuclear-encoded mitochondrial proteins in the cytoplasm and regulates transport or translation of these transcripts close to mitochondria, playing a role in mitochondrial biogenesis. This chain is Clustered mitochondria protein homolog (CLUH), found in Homo sapiens (Human).